The following is a 546-amino-acid chain: Cyclic GMP-AMP synthase-like receptor (546 aa).

The segment covering 1-10 (MPVGSRQNRV) has biased composition (polar residues). Disordered regions lie at residues 1–116 (MPVG…CASR) and 134–186 (AKQE…RLTN). Residues 35 to 45 (YTERKERKDVQ) are compositionally biased toward basic and acidic residues. Residues 69–80 (TSRTLRQTSQSR) are compositionally biased toward low complexity. 2 stretches are compositionally biased toward basic and acidic residues: residues 82-95 (EVLE…DCKK) and 145-174 (KEGY…DKAT). A compositionally biased stretch (polar residues) spans 175-186 (SHSTKGSFRLTN). Residues Ser243 and 255-257 (EFD) each bind ATP. Mg(2+) contacts are provided by Glu255, Asp257, and Asp374. GTP-binding positions include Asp374 and 428 to 435 (RTSFSLAE). ATP is bound by residues 432-435 (SLAE), Lys455, and 470-474 (SYHLK).

Belongs to the mab-21 family. Mg(2+) serves as cofactor. It depends on Mn(2+) as a cofactor.

It catalyses the reaction GTP + ATP = 2',3'-cGAMP + 2 diphosphate. The catalysed reaction is GTP + ATP = pppGp(2'-5')A + diphosphate. It carries out the reaction pppGp(2'-5')A = 2',3'-cGAMP + diphosphate. In terms of biological role, nucleotidyltransferase that catalyzes the formation of cyclic GMP-AMP (2',3'-cGAMP) from ATP and GTP and plays a key role in innate immunity. Directly binds some unknown ligand, activating the nucleotidyltransferase activity, leading to synthesis of 2',3'-cGAMP, a second messenger that binds to and activates Sting, thereby triggering the immune response via activation of the NF-kappa-B transcription factor. The protein is Cyclic GMP-AMP synthase-like receptor of Exaiptasia diaphana (Tropical sea anemone).